The following is an 83-amino-acid chain: Kunitz serine protease inhibitor Pr-mulgin 2 (83 aa).

A signal peptide spans 1-24; it reads MSSGGLLLLLGLLTLWEGLTPVSS. The BPTI/Kunitz inhibitor domain occupies 31–81; that stretch reads CHLPHDPGPCKGNFQAFYYHPVRRTCLEFIYGGCQGNPNNFKTIDECKRTC. 3 disulfide bridges follow: cysteine 31/cysteine 81, cysteine 40/cysteine 64, and cysteine 56/cysteine 77.

It belongs to the venom Kunitz-type family. As to expression, expressed by the venom gland.

The protein localises to the secreted. Serine protease inhibitor that acts against trypsin (EC(50)=10 nM, Ki=5nM), chymotrypsin (EC(50)=100 nM, Ki=40 nM), and plasmin (EC(50)=100 nM, Ki=40 nM). The chain is Kunitz serine protease inhibitor Pr-mulgin 2 from Pseudechis rossignolii (Papuan pigmy mulga snake).